Consider the following 93-residue polypeptide: Large ribosomal subunit protein bL27 (93 aa).

Residues 1–9 constitute a propeptide that is removed on maturation; it reads MIKINLQLF.

It belongs to the bacterial ribosomal protein bL27 family. The N-terminus is cleaved by ribosomal processing cysteine protease Prp.

The polypeptide is Large ribosomal subunit protein bL27 (Ruminiclostridium cellulolyticum (strain ATCC 35319 / DSM 5812 / JCM 6584 / H10) (Clostridium cellulolyticum)).